A 95-amino-acid polypeptide reads, in one-letter code: uncharacterized protein (95 aa).

A signal peptide spans 1 to 21; that stretch reads MKVLSISLIFFALLLTGCSQV.

This is an uncharacterized protein from Archaeoglobus fulgidus (strain ATCC 49558 / DSM 4304 / JCM 9628 / NBRC 100126 / VC-16).